A 149-amino-acid chain; its full sequence is Calmodulin-2 (149 aa).

EF-hand domains lie at 8–43, 44–79, 81–116, and 117–149; these read DQIS…LGQN, PTEA…KMKD, DSEE…LGEK, and LTDE…MMAK. Residues Asp21, Asp23, Asp25, Cys27, Glu32, Asp57, Asp59, Asn61, Thr63, Glu68, Asp94, Asp96, Asn98, Glu105, Asp130, Asp132, Asp134, Gln136, and Glu141 each contribute to the Ca(2+) site.

This sequence belongs to the calmodulin family. In terms of assembly, interacts with KCBP and CIP111. Binds to IQD1 and IQD20.

Its subcellular location is the cytoplasm. The protein resides in the cytoskeleton. Its function is as follows. Calmodulin mediates the control of a large number of enzymes, ion channels and other proteins by Ca(2+). Among the enzymes to be stimulated by the calmodulin-Ca(2+) complex are a number of protein kinases and phosphatases. This chain is Calmodulin-2 (CAM2), found in Arabidopsis thaliana (Mouse-ear cress).